The sequence spans 142 residues: Transcriptional regulator MraZ (142 aa).

SpoVT-AbrB domains follow at residues 5-51 (ASAL…PRPE) and 77-120 (AMDV…DAQT).

The protein belongs to the MraZ family. Forms oligomers.

Its subcellular location is the cytoplasm. The protein resides in the nucleoid. This chain is Transcriptional regulator MraZ, found in Paraburkholderia xenovorans (strain LB400).